The sequence spans 281 residues: MFTIQKPDTVSHLSHFHESKSLGSLPFPSDKERKQDTNFNILEETYDKNENWSQDKKGGEEGENKSKSEDEHSSLDNNRSQLKNRPIGQLKSTGSEGISLSSSEEEVRSPPEGAEIMQLEGDTPANDTANGFEKWAGSPLEDNGYASSSLSIDSPDSVSASTWQETTLPAPTTTPQENPETEDSDVESSSDSDSISVTLSEAFQSLQDKEKLKEREKEKHHAQLTMYRRLALLRWIRALQQKVRDQQNRLQESFDTILDNRKEMLRHMQHGYNKTPTKEAV.

Positions Met-1–His-12 are enriched in polar residues. The segment at Met-1–Val-197 is disordered. Over residues Thr-45–Ser-74 the composition is skewed to basic and acidic residues. 3 stretches are compositionally biased toward low complexity: residues Ser-92 to Ser-102, Ser-147 to Ser-161, and Pro-169 to Asn-178. Over residues Pro-179–Ser-190 the composition is skewed to acidic residues. Residues Thr-198 to Ile-257 are a coiled coil.

The protein belongs to the UPF0500 family.

The polypeptide is UPF0500 protein C1orf216 homolog (Xenopus laevis (African clawed frog)).